A 108-amino-acid polypeptide reads, in one-letter code: Parvalbumin alpha (108 aa).

Alanine 1 is subject to N-acetylalanine. 2 EF-hand domains span residues methionine 37–aspartate 72 and leucine 76–alanine 108. Ca(2+) is bound by residues aspartate 50, aspartate 52, serine 54, phenylalanine 56, glutamate 58, glutamate 61, aspartate 89, aspartate 91, aspartate 93, lysine 95, and glutamate 100.

The protein belongs to the parvalbumin family.

In terms of biological role, in muscle, parvalbumin is thought to be involved in relaxation after contraction. It binds two calcium ions. This is Parvalbumin alpha from Esox lucius (Northern pike).